The chain runs to 180 residues: 3-phenylpropionate/cinnamic acid dioxygenase subunit beta (180 aa).

Belongs to the bacterial ring-hydroxylating dioxygenase beta subunit family. In terms of assembly, this dioxygenase system consists of four proteins: the two subunits of the hydroxylase component (HcaE and HcaF), a ferredoxin (HcaC) and a ferredoxin reductase (HcaD).

It catalyses the reaction 3-phenylpropanoate + NADH + O2 + H(+) = 3-(cis-5,6-dihydroxycyclohexa-1,3-dien-1-yl)propanoate + NAD(+). The enzyme catalyses (E)-cinnamate + NADH + O2 + H(+) = (2E)-3-(cis-5,6-dihydroxycyclohexa-1,3-dien-1-yl)prop-2-enoate + NAD(+). Its pathway is aromatic compound metabolism; 3-phenylpropanoate degradation. Functionally, part of the multicomponent 3-phenylpropionate dioxygenase. Converts 3-phenylpropionic acid (PP) and cinnamic acid (CI) into 3-phenylpropionate-dihydrodiol (PP-dihydrodiol) and cinnamic acid-dihydrodiol (CI-dihydrodiol), respectively. The polypeptide is 3-phenylpropionate/cinnamic acid dioxygenase subunit beta (Photorhabdus laumondii subsp. laumondii (strain DSM 15139 / CIP 105565 / TT01) (Photorhabdus luminescens subsp. laumondii)).